The chain runs to 452 residues: FAD-linked oxidoreductase DDB_G0289697 (452 aa).

Residues 44–212 (VVNTPLLIVY…TDFTFKLHPV (169 aa)) enclose the FAD-binding PCMH-type domain. At histidine 81 the chain carries Pros-8alpha-FAD histidine.

The protein belongs to the oxygen-dependent FAD-linked oxidoreductase family. The cofactor is FAD.

This chain is FAD-linked oxidoreductase DDB_G0289697, found in Dictyostelium discoideum (Social amoeba).